A 300-amino-acid chain; its full sequence is MQFHSSSALITPFKKDLSVDEAAYEVLIKRQIFQGMDACVPVGTTGESATLTHKEHMRCIEIAVETCKNTKTPSNSRMKVLAGVGSNATSESLSLAKFAQKIGADAILCVSPYYNRPTQQGLFEHYKTIAQSVEIPVMLYDVPSRTGVSIEVSTALKLFREVPNIKAIKEASGSLKRVTELHYYEKDFKIFSGEDSLNHSIMFSGGCGVISVTGNLMPNLISQMVNCALKLEYQQALEIQNKLFHLHQALFVETNPIPIKMAMHLAGLIENPSYRLPLVVPSKETIKLLEKTLQQYEVIV.

Thr-45 provides a ligand contact to pyruvate. The active-site Proton donor/acceptor is the Tyr-140. The active-site Schiff-base intermediate with substrate is the Lys-169. Ile-210 lines the pyruvate pocket.

Belongs to the DapA family. In terms of assembly, homotetramer; dimer of dimers.

Its subcellular location is the cytoplasm. It catalyses the reaction L-aspartate 4-semialdehyde + pyruvate = (2S,4S)-4-hydroxy-2,3,4,5-tetrahydrodipicolinate + H2O + H(+). It participates in amino-acid biosynthesis; L-lysine biosynthesis via DAP pathway; (S)-tetrahydrodipicolinate from L-aspartate: step 3/4. Catalyzes the condensation of (S)-aspartate-beta-semialdehyde [(S)-ASA] and pyruvate to 4-hydroxy-tetrahydrodipicolinate (HTPA). The protein is 4-hydroxy-tetrahydrodipicolinate synthase of Helicobacter pylori (strain Shi470).